The chain runs to 932 residues: Envelope glycoprotein B (932 aa).

A compositionally biased stretch (low complexity) spans 1–12 (MAARGGAERAAG). Disordered regions lie at residues 1–25 (MAAR…RHLR) and 67–105 (GRPA…SPDN). The first 62 residues, 1 to 62 (MAARGGAERA…LWATWALLLA (62 aa)), serve as a signal peptide directing secretion. Topologically, residues 63–806 (APAAGRPATT…SGIASFIANP (744 aa)) are virion surface. Pro residues predominate over residues 71–95 (TTPPAPPPEEAASPAPPASPSPPGP). Residues asparagine 105 and asparagine 153 are each glycosylated (N-linked (GlcNAc...) asparagine; by host). 5 disulfides stabilise this stretch: cysteine 128–cysteine 607, cysteine 145–cysteine 563, cysteine 218–cysteine 282, cysteine 375–cysteine 423, and cysteine 628–cysteine 665. Involved in fusion and/or binding to host membrane stretches follow at residues 184–190 (TWAGSTY) and 269–276 (GSAGLYRT). Asparagine 441 and asparagine 483 each carry an N-linked (GlcNAc...) asparagine; by host glycan. Residues 492 to 527 (AAAPKPGPRRARRAAPSAPGGPGAANGPAGDGDAGG) are disordered. Over residues 511 to 526 (GGPGAANGPAGDGDAG) the composition is skewed to gly residues. Asparagine 640 and asparagine 706 each carry an N-linked (GlcNAc...) asparagine; by host glycan. 2 hydrophobic membrane proximal region regions span residues 751–804 (IDRV…SFIA) and 784–804 (VVLG…SFIA). A helical membrane pass occupies residues 807–827 (FGALATGLLVLAGLVAAFLAY). The Intravirion portion of the chain corresponds to 828–932 (RYISRLRSNP…QLPMADVGGA (105 aa)). The Golgi targeting signature appears at 880 to 883 (YMSL). Residues 921-924 (YQQL) carry the Internalization motif motif.

The protein belongs to the herpesviridae glycoprotein B family. As to quaternary structure, homotrimer; disulfide-linked. Binds to heparan sulfate proteoglycans. Interacts with gH/gL heterodimer. In terms of processing, a proteolytic cleavage by host furin generates two subunits that remain linked by disulfide bonds.

The protein localises to the virion membrane. It is found in the host cell membrane. The protein resides in the host endosome membrane. It localises to the host Golgi apparatus membrane. Envelope glycoprotein that forms spikes at the surface of virion envelope. Essential for the initial attachment to heparan sulfate moieties of the host cell surface proteoglycans. Involved in fusion of viral and cellular membranes leading to virus entry into the host cell. Following initial binding to its host receptors, membrane fusion is mediated by the fusion machinery composed at least of gB and the heterodimer gH/gL. May be involved in the fusion between the virion envelope and the outer nuclear membrane during virion egress. This chain is Envelope glycoprotein B, found in Bos taurus (Bovine).